The following is a 303-amino-acid chain: Geranylgeranyl pyrophosphate synthase (303 aa).

Residues K32, R35, and H64 each contribute to the isopentenyl diphosphate site. The Mg(2+) site is built by D71 and D75. R80 contributes to the dimethylallyl diphosphate binding site. Residue R81 participates in isopentenyl diphosphate binding. Dimethylallyl diphosphate contacts are provided by K158, T159, Q192, K209, and K219.

Belongs to the FPP/GGPP synthase family. Homooligomer. Mg(2+) serves as cofactor.

Its subcellular location is the cytoplasm. It catalyses the reaction isopentenyl diphosphate + dimethylallyl diphosphate = (2E)-geranyl diphosphate + diphosphate. The catalysed reaction is isopentenyl diphosphate + (2E)-geranyl diphosphate = (2E,6E)-farnesyl diphosphate + diphosphate. It carries out the reaction isopentenyl diphosphate + (2E,6E)-farnesyl diphosphate = (2E,6E,10E)-geranylgeranyl diphosphate + diphosphate. The protein operates within isoprenoid biosynthesis; farnesyl diphosphate biosynthesis; farnesyl diphosphate from geranyl diphosphate and isopentenyl diphosphate: step 1/1. Its pathway is isoprenoid biosynthesis; geranyl diphosphate biosynthesis; geranyl diphosphate from dimethylallyl diphosphate and isopentenyl diphosphate: step 1/1. It functions in the pathway isoprenoid biosynthesis; geranylgeranyl diphosphate biosynthesis; geranylgeranyl diphosphate from farnesyl diphosphate and isopentenyl diphosphate: step 1/1. Functionally, catalyzes the trans-addition of the three molecules of IPP onto DMAPP to form geranylgeranyl pyrophosphate, an important precursor of carotenoids and geranylated proteins. This Dictyostelium discoideum (Social amoeba) protein is Geranylgeranyl pyrophosphate synthase (ggps1).